The chain runs to 284 residues: Ribosomal RNA small subunit methyltransferase A (284 aa).

Residues Asn26, Leu28, Gly53, Glu74, Asp97, and Asn127 each coordinate S-adenosyl-L-methionine.

This sequence belongs to the class I-like SAM-binding methyltransferase superfamily. rRNA adenine N(6)-methyltransferase family. RsmA subfamily.

The protein localises to the cytoplasm. It catalyses the reaction adenosine(1518)/adenosine(1519) in 16S rRNA + 4 S-adenosyl-L-methionine = N(6)-dimethyladenosine(1518)/N(6)-dimethyladenosine(1519) in 16S rRNA + 4 S-adenosyl-L-homocysteine + 4 H(+). Functionally, specifically dimethylates two adjacent adenosines (A1518 and A1519) in the loop of a conserved hairpin near the 3'-end of 16S rRNA in the 30S particle. May play a critical role in biogenesis of 30S subunits. This is Ribosomal RNA small subunit methyltransferase A from Anaeromyxobacter dehalogenans (strain 2CP-C).